Reading from the N-terminus, the 203-residue chain is Adenosylcobalamin/alpha-ribazole phosphatase (203 aa).

His8 (tele-phosphohistidine intermediate) is an active-site residue. Glu81 functions as the Proton donor/acceptor in the catalytic mechanism.

Belongs to the phosphoglycerate mutase family.

It catalyses the reaction adenosylcob(III)alamin 5'-phosphate + H2O = adenosylcob(III)alamin + phosphate. The catalysed reaction is alpha-ribazole 5'-phosphate + H2O = alpha-ribazole + phosphate. Its pathway is nucleoside biosynthesis; alpha-ribazole biosynthesis; alpha-ribazole from 5,6-dimethylbenzimidazole: step 2/2. Functionally, catalyzes the conversion of adenosylcobalamin 5'-phosphate to adenosylcobalamin (vitamin B12); involved in the assembly of the nucleotide loop of cobalamin. Also catalyzes the hydrolysis of the phospho group from alpha-ribazole 5'-phosphate to form alpha-ribazole. This is Adenosylcobalamin/alpha-ribazole phosphatase (cobC) from Escherichia coli (strain K12).